The primary structure comprises 157 residues: Ribosomal RNA large subunit methyltransferase H (157 aa).

S-adenosyl-L-methionine contacts are provided by residues Leu73, Gly105, and 124 to 129 (LSKMTF).

Belongs to the RNA methyltransferase RlmH family. In terms of assembly, homodimer.

The protein resides in the cytoplasm. It catalyses the reaction pseudouridine(1915) in 23S rRNA + S-adenosyl-L-methionine = N(3)-methylpseudouridine(1915) in 23S rRNA + S-adenosyl-L-homocysteine + H(+). Its function is as follows. Specifically methylates the pseudouridine at position 1915 (m3Psi1915) in 23S rRNA. This Phocaeicola vulgatus (strain ATCC 8482 / DSM 1447 / JCM 5826 / CCUG 4940 / NBRC 14291 / NCTC 11154) (Bacteroides vulgatus) protein is Ribosomal RNA large subunit methyltransferase H.